We begin with the raw amino-acid sequence, 355 residues long: Peptide chain release factor 1 (355 aa).

Gln-233 carries the N5-methylglutamine modification.

Belongs to the prokaryotic/mitochondrial release factor family. In terms of processing, methylated by PrmC. Methylation increases the termination efficiency of RF1.

It localises to the cytoplasm. Its function is as follows. Peptide chain release factor 1 directs the termination of translation in response to the peptide chain termination codons UAG and UAA. This is Peptide chain release factor 1 from Bacillus cytotoxicus (strain DSM 22905 / CIP 110041 / 391-98 / NVH 391-98).